A 128-amino-acid chain; its full sequence is Small ribosomal subunit protein uS13 (128 aa).

Basic residues predominate over residues 95–118; sequence GLPVRGQRTHTNARTRKGPKKGLV. Residues 95–128 form a disordered region; that stretch reads GLPVRGQRTHTNARTRKGPKKGLVRKAAAPAPMA.

The protein belongs to the universal ribosomal protein uS13 family. Part of the 30S ribosomal subunit. Forms a loose heterodimer with protein S19. Forms two bridges to the 50S subunit in the 70S ribosome.

In terms of biological role, located at the top of the head of the 30S subunit, it contacts several helices of the 16S rRNA. In the 70S ribosome it contacts the 23S rRNA (bridge B1a) and protein L5 of the 50S subunit (bridge B1b), connecting the 2 subunits; these bridges are implicated in subunit movement. Contacts the tRNAs in the A and P-sites. The sequence is that of Small ribosomal subunit protein uS13 from Anaeromyxobacter dehalogenans (strain 2CP-1 / ATCC BAA-258).